The following is a 94-amino-acid chain: Selenoprotein K (94 aa).

Residues 20 to 42 form a helical membrane-spanning segment; it reads LSFITDFFWGIAEFVVLFFRTLL. A disordered region spans residues 48 to 94; the sequence is KRRGYGGSSDSRYDDGRGPPGNPPRRMGRINHLRGPNPPPMAGGUGR. U92 is a non-standard amino acid (selenocysteine).

The protein belongs to the selenoprotein K family. As to quaternary structure, interacts with DERL1, DERL2, DERL3 and SELENOS. The SELENOK-SELENOS complex interacts with VCP. Interacts with ZDHHC6. In terms of processing, cleaved by CAPN2/m-calpain in resting macrophages but not in activated macrophages. Macrophage activation up-regulates expression of the calpain inhibitor CAST/calpastatin, resulting in inhibition of CAPN2 activity. Post-translationally, truncated SELENOK proteins produced by failed UGA/Sec decoding are ubiquitinated by the CRL2(KLHDC2) complex, which recognizes the diglycine (Gly-Gly) at the C-terminus of truncated SELENOK proteins.

The protein resides in the endoplasmic reticulum membrane. It is found in the cell membrane. Required for Ca(2+) flux in immune cells and plays a role in T-cell proliferation and in T-cell and neutrophil migration. Involved in endoplasmic reticulum-associated degradation (ERAD) of soluble glycosylated proteins. Required for palmitoylation and cell surface expression of CD36 and involved in macrophage uptake of low-density lipoprotein and in foam cell formation. Together with ZDHHC6, required for palmitoylation of ITPR1 in immune cells, leading to regulate ITPR1 stability and function. Plays a role in protection of cells from ER stress-induced apoptosis. Protects cells from oxidative stress when overexpressed in cardiomyocytes. This is Selenoprotein K from Sus scrofa (Pig).